The primary structure comprises 205 residues: E3 ubiquitin-protein ligase complex slx8-rfp subunit rfp2 (205 aa).

The segment at 147 to 190 adopts an RING-type; degenerate zinc-finger fold; that stretch reads CAKCGNELVSDEKKSIFAAKCGHLFCSTCAKELRKKTVPCPVQH.

Part of an E3 ubiquitin complex including rfp1, rfp2 and slx8. Interacts with slx8.

It is found in the nucleus. It catalyses the reaction S-ubiquitinyl-[E2 ubiquitin-conjugating enzyme]-L-cysteine + [acceptor protein]-L-lysine = [E2 ubiquitin-conjugating enzyme]-L-cysteine + N(6)-ubiquitinyl-[acceptor protein]-L-lysine.. Its pathway is protein modification; protein ubiquitination. Functionally, mediates ubiquitination and subsequent desumoylation/degradation of sumoylated proteins and proteins containing SUMO-like domains. Involved in maintaining genome stability where it acts in the cellular response to DNA damage. The polypeptide is E3 ubiquitin-protein ligase complex slx8-rfp subunit rfp2 (rfp2) (Schizosaccharomyces pombe (strain 972 / ATCC 24843) (Fission yeast)).